The chain runs to 280 residues: Orotidine 5'-phosphate decarboxylase (280 aa).

Lys-96 (proton donor) is an active-site residue.

The protein belongs to the OMP decarboxylase family. Type 2 subfamily.

The catalysed reaction is orotidine 5'-phosphate + H(+) = UMP + CO2. It functions in the pathway pyrimidine metabolism; UMP biosynthesis via de novo pathway; UMP from orotate: step 2/2. In Parabacteroides distasonis (strain ATCC 8503 / DSM 20701 / CIP 104284 / JCM 5825 / NCTC 11152), this protein is Orotidine 5'-phosphate decarboxylase.